The sequence spans 133 residues: Helix-loop-helix protein 1 (133 aa).

The disordered stretch occupies residues 1–79 (MMLNSDTMEL…RRATAKYRTA (79 aa)). Residues 25 to 45 (DCGGGAGPDGAGPGGPGGGQA) show a composition bias toward gly residues. A compositionally biased stretch (basic and acidic residues) spans 52–65 (EPGRKDLQHLSREE). Over residues 66 to 79 (RRRRRRATAKYRTA) the composition is skewed to basic residues. One can recognise a bHLH domain in the interval 75 to 127 (KYRTAHATRERIRVEAFNLAFAELRKLLPTLPPDKKLSKIEILRLAICYISYL).

In terms of assembly, efficient DNA binding requires dimerization with another bHLH protein.

The protein resides in the nucleus. May serve as DNA-binding protein and may be involved in the control of cell-type determination, possibly within the developing nervous system. This Homo sapiens (Human) protein is Helix-loop-helix protein 1 (NHLH1).